We begin with the raw amino-acid sequence, 456 residues long: ATP-dependent protease ATPase subunit HslU (456 aa).

Residues Ile-18, 60-65 (GVGKTE), Asp-270, Glu-334, and Arg-406 contribute to the ATP site.

It belongs to the ClpX chaperone family. HslU subfamily. A double ring-shaped homohexamer of HslV is capped on each side by a ring-shaped HslU homohexamer. The assembly of the HslU/HslV complex is dependent on binding of ATP.

It localises to the cytoplasm. Functionally, ATPase subunit of a proteasome-like degradation complex; this subunit has chaperone activity. The binding of ATP and its subsequent hydrolysis by HslU are essential for unfolding of protein substrates subsequently hydrolyzed by HslV. HslU recognizes the N-terminal part of its protein substrates and unfolds these before they are guided to HslV for hydrolysis. The chain is ATP-dependent protease ATPase subunit HslU from Exiguobacterium sibiricum (strain DSM 17290 / CCUG 55495 / CIP 109462 / JCM 13490 / 255-15).